The sequence spans 156 residues: ATP synthase subunit b (156 aa).

Residues 7–29 (LIGQSITFIFFVWFSMKFVWPPI) form a helical membrane-spanning segment.

The protein belongs to the ATPase B chain family. As to quaternary structure, F-type ATPases have 2 components, F(1) - the catalytic core - and F(0) - the membrane proton channel. F(1) has five subunits: alpha(3), beta(3), gamma(1), delta(1), epsilon(1). F(0) has three main subunits: a(1), b(2) and c(10-14). The alpha and beta chains form an alternating ring which encloses part of the gamma chain. F(1) is attached to F(0) by a central stalk formed by the gamma and epsilon chains, while a peripheral stalk is formed by the delta and b chains.

It localises to the cell inner membrane. Its function is as follows. F(1)F(0) ATP synthase produces ATP from ADP in the presence of a proton or sodium gradient. F-type ATPases consist of two structural domains, F(1) containing the extramembraneous catalytic core and F(0) containing the membrane proton channel, linked together by a central stalk and a peripheral stalk. During catalysis, ATP synthesis in the catalytic domain of F(1) is coupled via a rotary mechanism of the central stalk subunits to proton translocation. Component of the F(0) channel, it forms part of the peripheral stalk, linking F(1) to F(0). The protein is ATP synthase subunit b of Thiobacillus denitrificans (strain ATCC 25259 / T1).